A 266-amino-acid chain; its full sequence is Ribosomal RNA small subunit methyltransferase A (266 aa).

Residues Asn10, Ile12, Gly37, Glu58, Asp82, and Asn105 each contribute to the S-adenosyl-L-methionine site.

This sequence belongs to the class I-like SAM-binding methyltransferase superfamily. rRNA adenine N(6)-methyltransferase family. RsmA subfamily.

The protein localises to the cytoplasm. The catalysed reaction is adenosine(1518)/adenosine(1519) in 16S rRNA + 4 S-adenosyl-L-methionine = N(6)-dimethyladenosine(1518)/N(6)-dimethyladenosine(1519) in 16S rRNA + 4 S-adenosyl-L-homocysteine + 4 H(+). In terms of biological role, specifically dimethylates two adjacent adenosines (A1518 and A1519) in the loop of a conserved hairpin near the 3'-end of 16S rRNA in the 30S particle. May play a critical role in biogenesis of 30S subunits. The chain is Ribosomal RNA small subunit methyltransferase A from Mycoplasma capricolum subsp. capricolum (strain California kid / ATCC 27343 / NCTC 10154).